We begin with the raw amino-acid sequence, 320 residues long: Iminosuccinate reductase (320 aa).

Lys-67 acts as the Proton donor/acceptor in catalysis. NAD(+) contacts are provided by residues Arg-110, 137-138 (HQ), Asn-159, Ser-199, 219-222 (MGTD), Lys-226, and Gly-291.

It belongs to the ornithine cyclodeaminase/mu-crystallin family. BhcD subfamily.

The enzyme catalyses L-aspartate + NAD(+) = iminosuccinate + NADH + H(+). Imine reductase that catalyzes the NADH-dependent reduction of iminosuccinate to L-aspartate. Is essential for the growth of P.denitrificans in the presence of glycolate and glyoxylate since it functions in glyoxylate assimilation via the beta-hydroxyaspartate cycle (BHAC). Thereby BhcD regenerates the amino group donor for the first step of the BHAC. This Paracoccus denitrificans (strain Pd 1222) protein is Iminosuccinate reductase.